Consider the following 474-residue polypeptide: ATP synthase subunit beta (474 aa).

Residue 155–162 (GGAGVGKT) coordinates ATP.

This sequence belongs to the ATPase alpha/beta chains family. F-type ATPases have 2 components, CF(1) - the catalytic core - and CF(0) - the membrane proton channel. CF(1) has five subunits: alpha(3), beta(3), gamma(1), delta(1), epsilon(1). CF(0) has three main subunits: a(1), b(2) and c(9-12). The alpha and beta chains form an alternating ring which encloses part of the gamma chain. CF(1) is attached to CF(0) by a central stalk formed by the gamma and epsilon chains, while a peripheral stalk is formed by the delta and b chains.

It localises to the cell inner membrane. The enzyme catalyses ATP + H2O + 4 H(+)(in) = ADP + phosphate + 5 H(+)(out). Its function is as follows. Produces ATP from ADP in the presence of a proton gradient across the membrane. The catalytic sites are hosted primarily by the beta subunits. This chain is ATP synthase subunit beta, found in Sorangium cellulosum (strain So ce56) (Polyangium cellulosum (strain So ce56)).